The sequence spans 697 residues: uncharacterized protein (697 aa).

Helical transmembrane passes span 45-65 (LCAVTAIISVVVPFAAGLALL), 86-106 (TVAAGMIAFLIAGLGGFMGVV), 128-148 (VVVSSLIGGFVFGAAMVGMLA), 198-218 (VLLGYFNIGIMIVSLIGWWAL), and 280-300 (HLAIIGANGSGKTTLMLILAG). 2 ABC transporter domains span residues 251–473 (VRLD…QPQH) and 477–696 (LELV…AGGM). ATP is bound by residues 285-292 (GANGSGKT) and 514-521 (GGNGSGKS). The helical transmembrane segment at 522 to 542 (TLAWIMAGLTIPTTGACLLDG) threads the bilayer.

Belongs to the ABC transporter superfamily.

The protein localises to the cell membrane. This is an uncharacterized protein from Mycobacterium tuberculosis (strain CDC 1551 / Oshkosh).